A 173-amino-acid polypeptide reads, in one-letter code: Large ribosomal subunit protein bL9 (173 aa).

Belongs to the bacterial ribosomal protein bL9 family.

Functionally, binds to the 23S rRNA. The sequence is that of Large ribosomal subunit protein bL9 from Rickettsia bellii (strain OSU 85-389).